The primary structure comprises 195 residues: Nucleoside triphosphate pyrophosphatase (195 aa).

Residue aspartate 70 is the Proton acceptor of the active site.

This sequence belongs to the Maf family. The cofactor is a divalent metal cation.

It localises to the cytoplasm. It carries out the reaction a ribonucleoside 5'-triphosphate + H2O = a ribonucleoside 5'-phosphate + diphosphate + H(+). The enzyme catalyses a 2'-deoxyribonucleoside 5'-triphosphate + H2O = a 2'-deoxyribonucleoside 5'-phosphate + diphosphate + H(+). Its function is as follows. Nucleoside triphosphate pyrophosphatase. May have a dual role in cell division arrest and in preventing the incorporation of modified nucleotides into cellular nucleic acids. The protein is Nucleoside triphosphate pyrophosphatase of Synechocystis sp. (strain ATCC 27184 / PCC 6803 / Kazusa).